A 90-amino-acid polypeptide reads, in one-letter code: Secretory calcium-binding phosphoprotein proline-glutamine-rich 1 (90 aa).

The N-terminal stretch at M1 to A15 is a signal peptide.

As to expression, expressed in enamel organ.

Its subcellular location is the secreted. Tooth-associated epithelia protein that may participate in structuring the basal lamina at cell-tooth interface. In Mus musculus (Mouse), this protein is Secretory calcium-binding phosphoprotein proline-glutamine-rich 1.